Consider the following 882-residue polypeptide: Translation initiation factor IF-2 (882 aa).

Composition is skewed to polar residues over residues 38–56 (NDSNSFVDLHNNSNKAEYS), 97–124 (GGYSQNRDNRTGGYSQNRDNRTGGYSQN), and 140–192 (GGYS…NRDS). Disordered regions lie at residues 38–192 (NDSN…NRDS) and 236–274 (STPAADSENSKELNRKLGEKKKQQQESQKSYKRKKAETE). Residues 243–259 (ENSKELNRKLGEKKKQQ) show a composition bias toward basic and acidic residues. In terms of domain architecture, tr-type G spans 380–553 (EKPPVITIMG…DMMLLKANPS (174 aa)). Residues 389-396 (GHVDHGKT) are G1. GTP is bound at residue 389–396 (GHVDHGKT). The interval 414 to 418 (GITQH) is G2. Residues 435–438 (DTPG) form a G3 region. GTP is bound by residues 435-439 (DTPGH) and 489-492 (NKID). The interval 489-492 (NKID) is G4. The tract at residues 525–527 (SAL) is G5.

It belongs to the TRAFAC class translation factor GTPase superfamily. Classic translation factor GTPase family. IF-2 subfamily.

The protein localises to the cytoplasm. In terms of biological role, one of the essential components for the initiation of protein synthesis. Protects formylmethionyl-tRNA from spontaneous hydrolysis and promotes its binding to the 30S ribosomal subunits. Also involved in the hydrolysis of GTP during the formation of the 70S ribosomal complex. This is Translation initiation factor IF-2 (infB) from Borreliella burgdorferi (strain ATCC 35210 / DSM 4680 / CIP 102532 / B31) (Borrelia burgdorferi).